Consider the following 4004-residue polypeptide: Hybrid PKS-NRPS synthetase mpsA (4004 aa).

Residues 5–438 (NEPIAVIGSA…GANAHAILES (434 aa)) enclose the Ketosynthase family 3 (KS3) domain. Catalysis depends on for beta-ketoacyl synthase activity residues C178, H317, and H358. Residues 544–867 (VFTGQGAQWP…RGGDDVNAFS (324 aa)) enclose the Malonyl-CoA:ACP transacylase (MAT) domain. The tract at residues 933–1066 (HPILGVKSIE…GTISITLGIP (134 aa)) is N-terminal hotdog fold. Positions 933 to 1233 (HPILGVKSIE…SMVPFSNATA (301 aa)) are dehydratase (DH) domain. A PKS/mFAS DH domain is found at 933–1234 (HPILGVKSIE…MVPFSNATAE (302 aa)). The active-site Proton acceptor; for dehydratase activity is H966. Residues 1081-1234 (MVDVEVDRFY…MVPFSNATAE (154 aa)) form a C-terminal hotdog fold region. The active-site Proton donor; for dehydratase activity is D1141. The interval 1289–1575 (EEEEQTLIHY…DTYAPNFDSL (287 aa)) is methyltransferase (MT) domain. The Ketoreductase (KR) domain maps to 2102-2272 (TYFMVGLSGE…RRGLAASILG (171 aa)). Residues 2384-2462 (EVVEIMQAGF…DLLNDALDRL (79 aa)) enclose the Carrier 1 domain. An O-(pantetheine 4'-phosphoryl)serine modification is found at S2422. A disordered region spans residues 2471 to 2540 (GADPSSVSRP…ERRAAELARK (70 aa)). The span at 2488–2500 (PSVSRPASNAPPV) shows a compositional bias: low complexity. Basic and acidic residues predominate over residues 2514–2540 (LKAEREREAEAKRKREEERRAAELARK). A condensation (C) domain region spans residues 2584-3019 (PMSFGQSRFW…RQCAERPGRE (436 aa)). An adenylation (A) (KR) domain region spans residues 3060-3459 (KRHTASLAIK…GRIEGDTQIK (400 aa)). The 78-residue stretch at 3570–3647 (ANLTPTESRL…GMARAIDDAT (78 aa)) folds into the Carrier 2 domain. O-(pantetheine 4'-phosphoryl)serine is present on S3607. The reductase (RED) domain stretch occupies residues 3694–3924 (LTIVLTGATG…VVEGVAQALF (231 aa)).

The protein in the C-terminal section; belongs to the NRP synthetase family. It depends on pantetheine 4'-phosphate as a cofactor.

It participates in secondary metabolite biosynthesis. Functionally, hybrid PKS-NRPS synthetase; part of the gene cluster that mediates the biosynthesis of macrophasetins, 3-decalinoyltetramic acids (DTAs) which feature a tetramate (pyrrolidine-2,4-dione) unit connected to a decalin fragment and that have potent bioactivities. The PKS-NRPS mpsA together with its associated enoylreductase partner mpsG incorporate one unit of acetyl-CoA, seven units of malonyl-CoA, and one unit of L-alanine to assemble the linear tetramic acid intermediate corresponding to the backbone of macrophasetins. Without the Diels-Alderase mpsD, the mpsA/G product can undergo the non-enzymatic intramolecular Diels-Alder (IMDA) reaction to generate both macrophasetin A and macrophasetin B. Catalyzed by mpsD, the linear tetramic acid intermediate is thoroughly converted to macrophasetin A via the endo-IMDA reaction in a regioselective and stereoselective manner. Finally, the cytochrome P450 monooxygenase mpsF catalyzes the hydroxylation at C20 to yield the end product macrophasetin C. In Macrophomina phaseolina (strain MS6) (Charcoal rot fungus), this protein is Hybrid PKS-NRPS synthetase mpsA.